The following is a 586-amino-acid chain: Arginine--tRNA ligase (586 aa).

The 'HIGH' region motif lies at 131–141; it reads ANPTGPMHVGH.

The protein belongs to the class-I aminoacyl-tRNA synthetase family. Monomer.

The protein localises to the cytoplasm. It catalyses the reaction tRNA(Arg) + L-arginine + ATP = L-arginyl-tRNA(Arg) + AMP + diphosphate. The polypeptide is Arginine--tRNA ligase (Azorhizobium caulinodans (strain ATCC 43989 / DSM 5975 / JCM 20966 / LMG 6465 / NBRC 14845 / NCIMB 13405 / ORS 571)).